A 212-amino-acid chain; its full sequence is ATP phosphoribosyltransferase (212 aa).

Belongs to the ATP phosphoribosyltransferase family. Short subfamily. As to quaternary structure, heteromultimer composed of HisG and HisZ subunits.

The protein localises to the cytoplasm. The enzyme catalyses 1-(5-phospho-beta-D-ribosyl)-ATP + diphosphate = 5-phospho-alpha-D-ribose 1-diphosphate + ATP. The protein operates within amino-acid biosynthesis; L-histidine biosynthesis; L-histidine from 5-phospho-alpha-D-ribose 1-diphosphate: step 1/9. In terms of biological role, catalyzes the condensation of ATP and 5-phosphoribose 1-diphosphate to form N'-(5'-phosphoribosyl)-ATP (PR-ATP). Has a crucial role in the pathway because the rate of histidine biosynthesis seems to be controlled primarily by regulation of HisG enzymatic activity. The sequence is that of ATP phosphoribosyltransferase (hisG) from Halalkalibacterium halodurans (strain ATCC BAA-125 / DSM 18197 / FERM 7344 / JCM 9153 / C-125) (Bacillus halodurans).